The sequence spans 125 residues: Small ribosomal subunit protein uS13 (125 aa).

The segment at 95–125 (GLPVNGQRTRTNARTRKGGKKTVANKKKVTK) is disordered. The segment covering 105–125 (TNARTRKGGKKTVANKKKVTK) has biased composition (basic residues).

This sequence belongs to the universal ribosomal protein uS13 family. Part of the 30S ribosomal subunit. Forms a loose heterodimer with protein S19. Forms two bridges to the 50S subunit in the 70S ribosome.

Its function is as follows. Located at the top of the head of the 30S subunit, it contacts several helices of the 16S rRNA. In the 70S ribosome it contacts the 23S rRNA (bridge B1a) and protein L5 of the 50S subunit (bridge B1b), connecting the 2 subunits; these bridges are implicated in subunit movement. Contacts the tRNAs in the A and P-sites. The polypeptide is Small ribosomal subunit protein uS13 (Leptospira interrogans serogroup Icterohaemorrhagiae serovar copenhageni (strain Fiocruz L1-130)).